Here is a 54-residue protein sequence, read N- to C-terminus: ATP synthase F(0) complex subunit 8 (54 aa).

The chain crosses the membrane as a helical span at residues 13–35; that stretch reads ALSLWVCFPLMMLSLSSFLPLTL.

This sequence belongs to the ATPase protein 8 family. Component of the ATP synthase complex composed at least of ATP5F1A/subunit alpha, ATP5F1B/subunit beta, ATP5MC1/subunit c (homooctomer), MT-ATP6/subunit a, MT-ATP8/subunit 8, ATP5ME/subunit e, ATP5MF/subunit f, ATP5MG/subunit g, ATP5MK/subunit k, ATP5MJ/subunit j, ATP5F1C/subunit gamma, ATP5F1D/subunit delta, ATP5F1E/subunit epsilon, ATP5PF/subunit F6, ATP5PB/subunit b, ATP5PD/subunit d, ATP5PO/subunit OSCP. ATP synthase complex consists of a soluble F(1) head domain (subunits alpha(3) and beta(3)) - the catalytic core - and a membrane F(0) domain - the membrane proton channel (subunits c, a, 8, e, f, g, k and j). These two domains are linked by a central stalk (subunits gamma, delta, and epsilon) rotating inside the F1 region and a stationary peripheral stalk (subunits F6, b, d, and OSCP).

The protein localises to the mitochondrion membrane. In terms of biological role, subunit 8, of the mitochondrial membrane ATP synthase complex (F(1)F(0) ATP synthase or Complex V) that produces ATP from ADP in the presence of a proton gradient across the membrane which is generated by electron transport complexes of the respiratory chain. ATP synthase complex consist of a soluble F(1) head domain - the catalytic core - and a membrane F(1) domain - the membrane proton channel. These two domains are linked by a central stalk rotating inside the F(1) region and a stationary peripheral stalk. During catalysis, ATP synthesis in the catalytic domain of F(1) is coupled via a rotary mechanism of the central stalk subunits to proton translocation. In vivo, can only synthesize ATP although its ATP hydrolase activity can be activated artificially in vitro. Part of the complex F(0) domain. The chain is ATP synthase F(0) complex subunit 8 from Myxine glutinosa (Atlantic hagfish).